Consider the following 110-residue polypeptide: Large ribosomal subunit protein P2 (110 aa).

The disordered stretch occupies residues 63–110; sequence ASVPSGGGVAAAAPAAGGGGADPAEAKEEKKEEPEEESDDDMGFGLFD. Residues 86-95 are compositionally biased toward basic and acidic residues; that stretch reads AEAKEEKKEE.

It belongs to the eukaryotic ribosomal protein P1/P2 family. P1 and P2 exist as dimers at the large ribosomal subunit. In terms of processing, phosphorylated.

Functionally, plays an important role in the elongation step of protein synthesis. This chain is Large ribosomal subunit protein P2, found in Cryptochiton stelleri (Giant gumboot chiton).